The sequence spans 111 residues: Large ribosomal subunit protein eL31 (111 aa).

The protein belongs to the eukaryotic ribosomal protein eL31 family.

The sequence is that of Large ribosomal subunit protein eL31 (rpl31) from Dictyostelium discoideum (Social amoeba).